Consider the following 473-residue polypeptide: Lactate utilization protein B (473 aa).

2 4Fe-4S ferredoxin-type domains span residues 302–332 and 351–380; these read GSEF…GHSY and YNDY…LHDL. [4Fe-4S] cluster is bound by residues Cys311, Cys314, Cys317, Cys321, Cys364, Cys367, and Cys371.

Belongs to the LutB/YkgF family.

Functionally, is involved in L-lactate degradation and allows cells to grow with lactate as the sole carbon source. Has probably a role as an electron transporter during oxidation of L-lactate. This chain is Lactate utilization protein B, found in Bacillus cereus (strain AH820).